Here is a 521-residue protein sequence, read N- to C-terminus: Colicin-E1* (521 aa).

2 disordered regions span residues 26 to 52 and 127 to 163; these read NGNP…AAIH and SGCA…EKEQ. A compositionally biased stretch (gly residues) spans 30-42; it reads DGSGSGGGGGTGG. Residues 133-145 are compositionally biased toward basic residues; sequence KQKKKPVKKRKRA. Residues 146-163 show a composition bias toward basic and acidic residues; the sequence is EKSFQEAEQRRKEIEKEQ. The next 2 helical transmembrane spans lie at 470 to 486 and 493 to 509; these read AVDA…FSVL and IWGI…FIDK.

The protein belongs to the channel forming colicin family.

The protein resides in the cell membrane. In terms of biological role, this colicin is a channel-forming colicin. This class of transmembrane toxins depolarize the cytoplasmic membrane, leading to dissipation of cellular energy. Functionally, colicins are polypeptide toxins produced by and active against E.coli and closely related bacteria. This is Colicin-E1* (cea) from Shigella sonnei.